The primary structure comprises 280 residues: Bifunctional protein FolD (280 aa).

Residues 166 to 168 and S191 contribute to the NADP(+) site; that span reads GRS.

The protein belongs to the tetrahydrofolate dehydrogenase/cyclohydrolase family. Homodimer.

It carries out the reaction (6R)-5,10-methylene-5,6,7,8-tetrahydrofolate + NADP(+) = (6R)-5,10-methenyltetrahydrofolate + NADPH. The enzyme catalyses (6R)-5,10-methenyltetrahydrofolate + H2O = (6R)-10-formyltetrahydrofolate + H(+). The protein operates within one-carbon metabolism; tetrahydrofolate interconversion. Functionally, catalyzes the oxidation of 5,10-methylenetetrahydrofolate to 5,10-methenyltetrahydrofolate and then the hydrolysis of 5,10-methenyltetrahydrofolate to 10-formyltetrahydrofolate. The chain is Bifunctional protein FolD from Saccharophagus degradans (strain 2-40 / ATCC 43961 / DSM 17024).